The following is a 212-amino-acid chain: Protein YIPF5 homolog (212 aa).

Topologically, residues 1 to 79 (MNNNNSFNFI…KKIDSHIMDD (79 aa)) are cytoplasmic. Residues 80 to 100 (TDLGGPILFGLLLGFSLLMSG) form a helical membrane-spanning segment. Residue Lys101 is a topological domain, lumenal. The helical transmembrane segment at 102-122 (IQFGYIYGLGLIGCVSMYIVL) threads the bilayer. The Cytoplasmic segment spans residues 123 to 128 (NLMSEK). Residues 129 to 149 (GIDIYRVISVLGYCLLPMIFL) form a helical membrane-spanning segment. The Lumenal portion of the chain corresponds to 150–163 (SFTSLIININGMVG). The helical transmembrane segment at 164-186 (YILIGFAIVWSTYSASKMFVKVL) threads the bilayer. Residues 187 to 191 (SMIDQ) are Cytoplasmic-facing. Residues 192-212 (RILVAYPVGLLYTGFALITAF) form a helical membrane-spanning segment.

This sequence belongs to the YIP1 family.

It is found in the endoplasmic reticulum membrane. It localises to the golgi apparatus. The protein localises to the cis-Golgi network membrane. Its function is as follows. Plays a role in transport between endoplasmic reticulum and Golgi. The sequence is that of Protein YIPF5 homolog (yipf5) from Dictyostelium discoideum (Social amoeba).